Consider the following 122-residue polypeptide: Large ribosomal subunit protein uL14 (122 aa).

This sequence belongs to the universal ribosomal protein uL14 family. As to quaternary structure, part of the 50S ribosomal subunit. Forms a cluster with proteins L3 and L19. In the 70S ribosome, L14 and L19 interact and together make contacts with the 16S rRNA in bridges B5 and B8.

Its function is as follows. Binds to 23S rRNA. Forms part of two intersubunit bridges in the 70S ribosome. The protein is Large ribosomal subunit protein uL14 of Staphylococcus aureus (strain MW2).